The chain runs to 174 residues: N5-carboxyaminoimidazole ribonucleotide mutase (174 aa).

Residues serine 15, aspartate 18, and arginine 45 each contribute to the substrate site.

This sequence belongs to the AIR carboxylase family. Class I subfamily.

The catalysed reaction is 5-carboxyamino-1-(5-phospho-D-ribosyl)imidazole + H(+) = 5-amino-1-(5-phospho-D-ribosyl)imidazole-4-carboxylate. The protein operates within purine metabolism; IMP biosynthesis via de novo pathway; 5-amino-1-(5-phospho-D-ribosyl)imidazole-4-carboxylate from 5-amino-1-(5-phospho-D-ribosyl)imidazole (N5-CAIR route): step 2/2. Catalyzes the conversion of N5-carboxyaminoimidazole ribonucleotide (N5-CAIR) to 4-carboxy-5-aminoimidazole ribonucleotide (CAIR). The polypeptide is N5-carboxyaminoimidazole ribonucleotide mutase (Pyrococcus abyssi (strain GE5 / Orsay)).